The chain runs to 61 residues: Lens epithelial cell protein LEP503 (61 aa).

Restricted to lens epithelial cells.

May play a role in lens epithelial cell differentiation. This Homo sapiens (Human) protein is Lens epithelial cell protein LEP503 (LENEP).